Reading from the N-terminus, the 517-residue chain is DNA relaxase MbeA (517 aa).

The O-(5'-phospho-DNA)-tyrosine intermediate role is filled by Y19. A divalent metal cation-binding residues include H97, E104, and N106. Disordered regions lie at residues 281–310 (YSPV…QEGR), 380–405 (PSVR…VTQS), and 496–517 (SLER…SLGW). Over residues 297–310 (GRGERGDDAAQEGR) the composition is skewed to basic and acidic residues. Residues 496–510 (SLERERQPEIQERTL) are compositionally biased toward basic and acidic residues.

This sequence to E.coli MbaA and MbkA. Interacts with MbeB and MbeC to form the relaxosome. The cofactor is Mn(2+). Co(2+) is required as a cofactor. Requires Ni(2+) as cofactor.

It catalyses the reaction ATP-independent breakage of single-stranded DNA, followed by passage and rejoining.. Its function is as follows. Relaxase involved in plasmid ColE1 conjugative mobilization and is thus essential to promote the specific transfer of the plasmid during conjugation. First catalyzes the specific cleavage of one of the DNA strands at oriT, forming a covalent 5'-phosphotyrosine intermediate. The nic site corresponds to 5'-(1469)CTGG/CTTA(1462)-3' in the cleaved strand. The cleaved strand is then transferred through the dedicated type IV secretion apparatus. MbeA remains covalently linked at the 5' end of the strand, and once in the recipient cell, it probably catalyzes the rejoining of the two ends of the strand, re-forming the circular plasmid DNA. Is functional in vitro without a requirement for the conjugative accessory proteins. The polypeptide is DNA relaxase MbeA (mbeA) (Escherichia coli).